The primary structure comprises 216 residues: Probable GTP-binding protein EngB (216 aa).

The region spanning 30–204 (SGLEVAFAGR…QMVLAGWLDL (175 aa)) is the EngB-type G domain. GTP-binding positions include 38 to 45 (GRSNAGKS), 64 to 68 (GRTQL), 82 to 85 (DLPG), 149 to 152 (TKAD), and 182 to 185 (LFSA). Serine 45 and threonine 66 together coordinate Mg(2+).

The protein belongs to the TRAFAC class TrmE-Era-EngA-EngB-Septin-like GTPase superfamily. EngB GTPase family. Requires Mg(2+) as cofactor.

Functionally, necessary for normal cell division and for the maintenance of normal septation. This is Probable GTP-binding protein EngB from Ectopseudomonas mendocina (strain ymp) (Pseudomonas mendocina).